Here is a 422-residue protein sequence, read N- to C-terminus: Acetyl-CoA acetyltransferase, mitochondrial (422 aa).

The N-terminal 28 residues, 1-28 (MPVLAALLRRGPLLQRRVQEIRYAERSY), are a transit peptide targeting the mitochondrion. Residue lysine 61 is modified to N6-acetyllysine; alternate. N6-succinyllysine; alternate is present on lysine 61. Lysine 73 is modified (N6-succinyllysine). The active-site Acyl-thioester intermediate is cysteine 121. Residues lysine 169, lysine 176, lysine 185, and lysine 197 each carry the N6-acetyllysine; alternate modification. An N6-succinyllysine; alternate mark is found at lysine 169, lysine 176, lysine 185, and lysine 197. A CoA-binding site is contributed by tyrosine 214. Tyrosine 214 serves as a coordination point for K(+). The residue at position 218 (lysine 218) is an N6-acetyllysine; alternate. Lysine 218 carries the N6-succinyllysine; alternate modification. Position 238 is an N6-succinyllysine (lysine 238). Lysine 240 carries the N6-acetyllysine; alternate modification. Lysine 240 carries the N6-succinyllysine; alternate modification. N6-acetyllysine is present on residues lysine 246 and lysine 252. CoA is bound by residues 253–255 (RVD) and lysine 258. At lysine 258 the chain carries N6-acetyllysine; alternate. Lysine 258 bears the N6-succinyllysine; alternate mark. Lysine 261 and lysine 263 each carry N6-succinyllysine. Positions 275, 276, and 278 each coordinate K(+). Serine 279 serves as a coordination point for CoA. Lysine 333 is subject to N6-acetyllysine. Valine 376 provides a ligand contact to K(+). Cysteine 408 serves as the catalytic Proton donor/acceptor.

It belongs to the thiolase-like superfamily. Thiolase family. In terms of assembly, homotetramer. In terms of processing, succinylation at Lys-263, adjacent to a coenzyme A binding site. Desuccinylated by SIRT5.

Its subcellular location is the mitochondrion. It catalyses the reaction 2 acetyl-CoA = acetoacetyl-CoA + CoA. The enzyme catalyses propanoyl-CoA + acetyl-CoA = 2-methyl-3-oxobutanoyl-CoA + CoA. The protein operates within lipid metabolism; fatty acid beta-oxidation. With respect to regulation, activated by potassium ions, but not sodium ions. In terms of biological role, this is one of the enzymes that catalyzes the last step of the mitochondrial beta-oxidation pathway, an aerobic process breaking down fatty acids into acetyl-CoA. Using free coenzyme A/CoA, catalyzes the thiolytic cleavage of medium- to long-chain 3-oxoacyl-CoAs into acetyl-CoA and a fatty acyl-CoA shortened by two carbon atoms. The activity of the enzyme is reversible and it can also catalyze the condensation of two acetyl-CoA molecules into acetoacetyl-CoA. Thereby, it plays a major role in ketone body metabolism. The sequence is that of Acetyl-CoA acetyltransferase, mitochondrial (ACAT1) from Bos taurus (Bovine).